Here is a 300-residue protein sequence, read N- to C-terminus: uncharacterized protein (300 aa).

This sequence belongs to the histone deacetylase family.

Functionally, putative deacetylase. This is an uncharacterized protein from Picosynechococcus sp. (strain ATCC 27264 / PCC 7002 / PR-6) (Agmenellum quadruplicatum).